The primary structure comprises 357 residues: Histidinol-phosphate aminotransferase 1 (357 aa).

Lys210 is subject to N6-(pyridoxal phosphate)lysine.

The protein belongs to the class-II pyridoxal-phosphate-dependent aminotransferase family. Histidinol-phosphate aminotransferase subfamily. Homodimer. The cofactor is pyridoxal 5'-phosphate.

It catalyses the reaction L-histidinol phosphate + 2-oxoglutarate = 3-(imidazol-4-yl)-2-oxopropyl phosphate + L-glutamate. It functions in the pathway amino-acid biosynthesis; L-histidine biosynthesis; L-histidine from 5-phospho-alpha-D-ribose 1-diphosphate: step 7/9. The protein is Histidinol-phosphate aminotransferase 1 of Methylococcus capsulatus (strain ATCC 33009 / NCIMB 11132 / Bath).